A 313-amino-acid chain; its full sequence is CBK1 kinase activator protein MOB2 (313 aa).

A disordered region spans residues 1–109 (MSFLNTIRGL…KRSSIQTTKS (109 aa)). Polar residues predominate over residues 23-69 (PSNNAIYSHSNLSGNGLRRTQSPTKFSPSKLSSKGAQGSAAYTSSPT). 4 positions are modified to phosphoserine; by CDC28: Ser-44, Ser-51, Ser-67, and Ser-97. Over residues 76 to 97 (QSLQHQDSQSSLQYQQQSGSVS) the composition is skewed to low complexity. Positions 98 to 109 (PSKRSSIQTTKS) are enriched in polar residues.

It belongs to the MOB1/phocein family. In terms of assembly, interacts with protein kinase CBK1 to form the RAM CBK1-MOB2 kinase complex. In terms of processing, phosphorylated by CDC28 at Ser-44, Ser-51, Ser-67, and Ser-97. Phosphorylation occurs during bud emergence and is maintained until the G2/M transition. Dephosphorylated at the end of mitosis. Phosphorylation is required for the maintenance of polarisome components in hyphae.

It is found in the nucleus. Its subcellular location is the cytoplasm. In terms of biological role, functions as an activator subunit for the CBK1 protein kinase. Part of the regulation of ACE2 activity and cellular morphogenesis (RAM) signaling network. The RAM network is critically required for hyphal growth as well as normal vegetative growth, and for polarization of lipid rafts and the actin cytoskeleton. It play an essential role in biofilm formation. The RAM network also plays a role in serum- and antifungal azoles-induced activation of ergosterol biosynthesis genes, especially those involved in the late steps of ergosterol biosynthesis. The polypeptide is CBK1 kinase activator protein MOB2 (MOB2) (Candida albicans (strain SC5314 / ATCC MYA-2876) (Yeast)).